Here is a 185-residue protein sequence, read N- to C-terminus: MAKQVIQQAKEKMDKAVQAFTRELASIRAGRANAGLLEKVTVDYYGVPTPINQLASISVPEARLLVIQPYDKSAIKEMEKAILASDLGLTPSNDGSVIRLVIPPLTEERRRELAKLVKKYSEDAKVAVRNIRRDANDELKKLEKNGEITEDELRSYTDEVQKLTDDHIAKIDAITKEKEKEVMEV.

This sequence belongs to the RRF family.

The protein localises to the cytoplasm. Responsible for the release of ribosomes from messenger RNA at the termination of protein biosynthesis. May increase the efficiency of translation by recycling ribosomes from one round of translation to another. In Geobacillus kaustophilus (strain HTA426), this protein is Ribosome-recycling factor.